The chain runs to 296 residues: Lipoyl synthase (296 aa).

[4Fe-4S] cluster is bound by residues Cys-38, Cys-43, Cys-49, Cys-64, Cys-68, Cys-71, and Ser-279. One can recognise a Radical SAM core domain in the interval Trp-50–Lys-268.

This sequence belongs to the radical SAM superfamily. Lipoyl synthase family. Requires [4Fe-4S] cluster as cofactor.

Its subcellular location is the cytoplasm. The enzyme catalyses [[Fe-S] cluster scaffold protein carrying a second [4Fe-4S](2+) cluster] + N(6)-octanoyl-L-lysyl-[protein] + 2 oxidized [2Fe-2S]-[ferredoxin] + 2 S-adenosyl-L-methionine + 4 H(+) = [[Fe-S] cluster scaffold protein] + N(6)-[(R)-dihydrolipoyl]-L-lysyl-[protein] + 4 Fe(3+) + 2 hydrogen sulfide + 2 5'-deoxyadenosine + 2 L-methionine + 2 reduced [2Fe-2S]-[ferredoxin]. It participates in protein modification; protein lipoylation via endogenous pathway; protein N(6)-(lipoyl)lysine from octanoyl-[acyl-carrier-protein]: step 2/2. Functionally, catalyzes the radical-mediated insertion of two sulfur atoms into the C-6 and C-8 positions of the octanoyl moiety bound to the lipoyl domains of lipoate-dependent enzymes, thereby converting the octanoylated domains into lipoylated derivatives. The protein is Lipoyl synthase of Methanocella arvoryzae (strain DSM 22066 / NBRC 105507 / MRE50).